Reading from the N-terminus, the 451-residue chain is Gamma-aminobutyric acid receptor subunit alpha-2 (451 aa).

Positions 1-28 are cleaved as a signal peptide; that stretch reads MKTKLSTCNVWSLLLVLLVWDPVRLVLA. The Extracellular portion of the chain corresponds to 29–249; that stretch reads NIQEDEAKNN…MTAHFHLKRK (221 aa). N-linked (GlcNAc...) asparagine glycosylation occurs at Asn-38. Residue Arg-94 coordinates 4-aminobutanoate. An N-linked (GlcNAc...) asparagine glycan is attached at Asn-138. A 4-aminobutanoate-binding site is contributed by Thr-157. Cysteines 166 and 180 form a disulfide. Residues 250–270 form a helical membrane-spanning segment; it reads IGYFVIQTYLPCIMTVILSQV. Topologically, residues 271 to 280 are cytoplasmic; sequence SFWLNRESVP. The helical transmembrane segment at 281–300 threads the bilayer; it reads ARTVFGVTTVLTMTTLSISA. The Extracellular portion of the chain corresponds to 301-311; it reads RNSLPKVAYAT. A helical membrane pass occupies residues 312 to 332; it reads AMDWFIAVCYAFVFSALIEFA. Residues 333–420 are Cytoplasmic-facing; the sequence is TVNYFTKRGW…FNSVSKIDRM (88 aa). The interval 389–408 is disordered; sequence KSATTPEPNKKPENKPAEAK. Over residues 396–408 the composition is skewed to basic and acidic residues; the sequence is PNKKPENKPAEAK. The chain crosses the membrane as a helical span at residues 421-441; the sequence is SRIVFPVLFGTFNLVYWATYL. The Extracellular portion of the chain corresponds to 442-451; that stretch reads NREPVLGVSP.

This sequence belongs to the ligand-gated ion channel (TC 1.A.9) family. Gamma-aminobutyric acid receptor (TC 1.A.9.5) subfamily. GABRA2 sub-subfamily. As to quaternary structure, heteropentamer, formed by a combination of alpha (GABRA1-6), beta (GABRB1-3), gamma (GABRG1-3), delta (GABRD), epsilon (GABRE), rho (GABRR1-3), pi (GABRP) and theta (GABRQ) subunits, each subunit exhibiting distinct physiological and pharmacological properties. Interacts with UBQLN1. Interacts with KIF21B. Interacts with LHFPL4. Interacts with SHISA7; interaction leads to the regulation of GABA(A) receptor trafficking, channel deactivation kinetics and pharmacology. Glycosylated.

It is found in the postsynaptic cell membrane. The protein resides in the cell membrane. The protein localises to the cytoplasmic vesicle membrane. Its subcellular location is the cell projection. It localises to the dendrite. The enzyme catalyses chloride(in) = chloride(out). Activated by pentobarbital. Inhibited by the antagonist bicuculline. Alpha subunit of the heteropentameric ligand-gated chloride channel gated by gamma-aminobutyric acid (GABA), a major inhibitory neurotransmitter in the brain. GABA-gated chloride channels, also named GABA(A) receptors (GABAAR), consist of five subunits arranged around a central pore and contain GABA active binding site(s) located at the alpha and beta subunit interface(s). When activated by GABA, GABAARs selectively allow the flow of chloride anions across the cell membrane down their electrochemical gradient. Chloride influx into the postsynaptic neuron following GABAAR opening decreases the neuron ability to generate a new action potential, thereby reducing nerve transmission. The alpha-2 subunit exhibits synaptogenic activity together with beta-2 and very little to no activity together with beta-3, the gamma-2 subunit being necessary but not sufficient to induce rapid synaptic contacts formation. The sequence is that of Gamma-aminobutyric acid receptor subunit alpha-2 from Mus musculus (Mouse).